The chain runs to 621 residues: Glutathione-regulated potassium-efflux system protein KefC (621 aa).

Helical transmembrane passes span 4–24, 26–46, 54–74, 90–110, 114–134, 149–169, 178–198, 218–237, 238–257, 270–290, 294–314, 326–346, and 359–379; these read HTLI…PIAV, LGLG…PWAL, AILH…GLEL, GALQ…LLGL, VAEL…MQAM, FAVL…IPLL, LMAF…VVVL, VFSA…LEEV, GLSM…SSEY, GLLL…GTLV, LRIV…LWLI, RWFA…FGAA, and ALTL…VLLT. The region spanning 399–518 is the RCK N-terminal domain; it reads QPRVIVAGFG…AGVEAPERET (120 aa). The interval 598–621 is disordered; that stretch reads GWQGTEEGRHTGDIADEPENKPSA.

The protein belongs to the monovalent cation:proton antiporter 2 (CPA2) transporter (TC 2.A.37) family. KefC subfamily. In terms of assembly, homodimer. Interacts with the regulatory subunit KefF.

It localises to the cell inner membrane. Functionally, pore-forming subunit of a potassium efflux system that confers protection against electrophiles. Catalyzes K(+)/H(+) antiport. This is Glutathione-regulated potassium-efflux system protein KefC from Klebsiella pneumoniae subsp. pneumoniae (strain ATCC 700721 / MGH 78578).